The chain runs to 1330 residues: ABC multidrug transporter mdr4 (1330 aa).

A glycan (N-linked (GlcNAc...) asparagine) is linked at N3. Helical transmembrane passes span 90 to 110 (VLLI…FPLL), 144 to 164 (VLYV…HSTC), 218 to 238 (KVGL…VAFI), 243 to 263 (IAGM…GGGH), 324 to 344 (HAAQ…LAFW), and 370 to 390 (IFVL…IHVF). The ABC transmembrane type-1 1 domain occupies 94–392 (IGGLLFAICA…VAPFIHVFAS (299 aa)). Residues 428–666 (IRFRDVHFKY…GGVYAEMVRL (239 aa)) form the ABC transporter 1 domain. 463–470 (GPSGGGKS) contributes to the ATP binding site. The N-linked (GlcNAc...) asparagine glycan is linked to N707. The interval 717–736 (VADTPSDSRDGSEEEARKKR) is disordered. Over residues 722-733 (SDSRDGSEEEAR) the composition is skewed to basic and acidic residues. The next 6 membrane-spanning stretches (helical) occupy residues 761–781 (LLGL…AIVF), 806–826 (LLFF…GCAF), 871–893 (ASAL…VNLI), 903–923 (AWKI…SGMM), 989–1009 (AWLA…YWWG), and 1023–1043 (FFIV…MFAL). The 289-residue stretch at 761–1049 (LLGLAMSVII…MFALAPDISK (289 aa)) folds into the ABC transmembrane type-1 2 domain. Residues 1086–1325 (AQLRDVHFTY…SETYRTSVIH (240 aa)) form the ABC transporter 2 domain. 1121–1128 (GPSGSGKS) provides a ligand contact to ATP.

Belongs to the ABC transporter superfamily. ABCB family. Multidrug resistance exporter (TC 3.A.1.201) subfamily.

It localises to the cell membrane. It catalyses the reaction itraconazole(in) + ATP + H2O = itraconazole(out) + ADP + phosphate + H(+). It carries out the reaction voriconazole(in) + ATP + H2O = voriconazole(out) + ADP + phosphate + H(+). Functionally, pleiotropic ABC efflux transporter that confers resistance to azoles such as itraconazole and voriconazole. This chain is ABC multidrug transporter mdr4, found in Aspergillus fumigatus (strain ATCC MYA-4609 / CBS 101355 / FGSC A1100 / Af293) (Neosartorya fumigata).